The primary structure comprises 183 residues: Capsid protein (183 aa).

A disordered region spans residues 136-183 (NAPILSTLPETTVVRRRGRSPRRRTPSPRRRRSQSPRRRRTQSRESQC). The segment covering 149–176 (VRRRGRSPRRRTPSPRRRRSQSPRRRRT) has biased composition (basic residues). Phosphoserine; by host is present on residues Ser-155, Ser-162, and Ser-170. The 1; half-length repeat unit spans residues 155–161 (SPRRRTP). The segment at 155–177 (SPRRRTPSPRRRRSQSPRRRRTQ) is 3 X 8 AA repeats of S-P-R-R-R-[PR]-[ST]-Q. The Bipartite nuclear localization signal signature appears at 158-175 (RRTPSPRRRRSQSPRRRR). 2 tandem repeats follow at residues 162–169 (SPRRRRSQ) and 170–177 (SPRRRRTQ). Residues 177–183 (QSRESQC) form an RNA binding region.

This sequence belongs to the orthohepadnavirus core antigen family. As to quaternary structure, homodimerizes, then multimerizes. Interacts with cytosol exposed regions of viral L glycoprotein present in the reticulum-to-Golgi compartment. Interacts with human FLNB. Phosphorylated form interacts with host importin alpha; this interaction depends on the exposure of the NLS, which itself depends upon genome maturation and/or phosphorylation of the capsid protein. Interacts with host NUP153. In terms of processing, phosphorylated by host SRPK1, SRPK2, and maybe protein kinase C or GAPDH. Phosphorylation is critical for pregenomic RNA packaging. Protein kinase C phosphorylation is stimulated by HBx protein and may play a role in transport of the viral genome to the nucleus at the late step during the viral replication cycle.

Its subcellular location is the virion. The protein resides in the host cytoplasm. Its function is as follows. Self assembles to form an icosahedral capsid. Most capsids appear to be large particles with an icosahedral symmetry of T=4 and consist of 240 copies of capsid protein, though a fraction forms smaller T=3 particles consisting of 180 capsid proteins. Entering capsids are transported along microtubules to the nucleus. Phosphorylation of the capsid is thought to induce exposure of nuclear localization signal in the C-terminal portion of the capsid protein that allows binding to the nuclear pore complex via the importin (karyopherin-) alpha and beta. Capsids are imported in intact form through the nuclear pore into the nuclear basket, where it probably binds NUP153. Only capsids that contain the mature viral genome can release the viral DNA and capsid protein into the nucleoplasm. Immature capsids get stuck in the basket. Capsids encapsulate the pre-genomic RNA and the P protein. Pre-genomic RNA is reverse-transcribed into DNA while the capsid is still in the cytoplasm. The capsid can then either be directed to the nucleus, providing more genomes for transcription, or bud through the endoplasmic reticulum to provide new virions. The polypeptide is Capsid protein (Hepatitis B virus genotype D (isolate France/alpha1/1989) (HBV-D)).